The following is a 576-amino-acid chain: MNIQVLLSDKVSQALIAAGAPADCEAQVRQSAKAQFGDYQANGVMSVAKKLGMPPRQLAEKVVQLLDLGDVASKVEIAGPGFINIFLNSQWVAQQADRVLSAPKLDIAPVKQQTIVIDYSAPNVAKEMHVGHLRSTIIGDAAARTQEFLGHKVIRANHVGDWGTQFGMLIAYLEKMQNENASDMGLSDLEQFYREAKKHYDEDADFAERARAYVVKLQGGDQYCLKMWRKLVDITMAQNQLTYNRLNVTLTEDDVMGESLYNAMLPGIVADLKAKGLAVESEGATVVFLDEYKNKDGEPMGVIIQKKDGGYLYTTTDIACAKYRYETLGADRVLYYIDSRQHQHLMQAWTIVRKAGYIPDSLSLEHHMFGMMLGKDGKPFKTRSGGTVKLSDLLDEAVDRAGKLIAEKNPDMPAEEMQSLANAVGIGAVKYADLSKSRTTDYIFDWDNMLAFEGNTAPYMQYAYTRVASVFKRAGVDESNLTLPLVMTEEREITLATRLLQFEEVITTVAREGTPHVMCSYLYDLAGLFSGFYEHCQILNADSEEARQSRLKLSLLTAKTLKVGLDTLGIETVERM.

The 'HIGH' region signature appears at 122-132; sequence PNVAKEMHVGH.

It belongs to the class-I aminoacyl-tRNA synthetase family. As to quaternary structure, monomer.

The protein resides in the cytoplasm. It catalyses the reaction tRNA(Arg) + L-arginine + ATP = L-arginyl-tRNA(Arg) + AMP + diphosphate. The protein is Arginine--tRNA ligase of Serratia proteamaculans (strain 568).